Consider the following 199-residue polypeptide: Small ribosomal subunit protein eS6 (199 aa).

Over residues 172 to 183 (KEQREKRSESLA) the composition is skewed to basic and acidic residues. A disordered region spans residues 172–199 (KEQREKRSESLAKKRSRLSAASKPSIAA).

It belongs to the eukaryotic ribosomal protein eS6 family. Ribosomal protein S6 is the major substrate of protein kinases in eukaryote ribosomes.

Its function is as follows. Component of the 40S small ribosomal subunit. Plays an important role in controlling cell growth and proliferation through the selective translation of particular classes of mRNA. The polypeptide is Small ribosomal subunit protein eS6 (RPS6) (Nicotiana tabacum (Common tobacco)).